The primary structure comprises 264 residues: Indole-3-glycerol phosphate synthase (264 aa).

It belongs to the TrpC family.

The enzyme catalyses 1-(2-carboxyphenylamino)-1-deoxy-D-ribulose 5-phosphate + H(+) = (1S,2R)-1-C-(indol-3-yl)glycerol 3-phosphate + CO2 + H2O. The protein operates within amino-acid biosynthesis; L-tryptophan biosynthesis; L-tryptophan from chorismate: step 4/5. The polypeptide is Indole-3-glycerol phosphate synthase (Carboxydothermus hydrogenoformans (strain ATCC BAA-161 / DSM 6008 / Z-2901)).